Reading from the N-terminus, the 100-residue chain is uncharacterized protein (100 aa).

Helical transmembrane passes span phenylalanine 30–phenylalanine 50 and phenylalanine 69–phenylalanine 89.

The protein localises to the cytoplasm. The protein resides in the nucleus membrane. This is an uncharacterized protein from Schizosaccharomyces pombe (strain 972 / ATCC 24843) (Fission yeast).